We begin with the raw amino-acid sequence, 111 residues long: ATP synthase subunit c (111 aa).

Transmembrane regions (helical) follow at residues 38–58 (GLGV…GSGL) and 89–109 (AGIA…LIFV).

The protein belongs to the ATPase C chain family. F-type ATPases have 2 components, F(1) - the catalytic core - and F(0) - the membrane proton channel. F(1) has five subunits: alpha(3), beta(3), gamma(1), delta(1), epsilon(1). F(0) has three main subunits: a(1), b(2) and c(10-14). The alpha and beta chains form an alternating ring which encloses part of the gamma chain. F(1) is attached to F(0) by a central stalk formed by the gamma and epsilon chains, while a peripheral stalk is formed by the delta and b chains.

It is found in the cell membrane. F(1)F(0) ATP synthase produces ATP from ADP in the presence of a proton or sodium gradient. F-type ATPases consist of two structural domains, F(1) containing the extramembraneous catalytic core and F(0) containing the membrane proton channel, linked together by a central stalk and a peripheral stalk. During catalysis, ATP synthesis in the catalytic domain of F(1) is coupled via a rotary mechanism of the central stalk subunits to proton translocation. Functionally, key component of the F(0) channel; it plays a direct role in translocation across the membrane. A homomeric c-ring of between 10-14 subunits forms the central stalk rotor element with the F(1) delta and epsilon subunits. The chain is ATP synthase subunit c from Mycoplasmopsis synoviae (strain 53) (Mycoplasma synoviae).